The sequence spans 376 residues: Lipid-A-disaccharide synthase (376 aa).

The protein belongs to the LpxB family.

It catalyses the reaction a lipid X + a UDP-2-N,3-O-bis[(3R)-3-hydroxyacyl]-alpha-D-glucosamine = a lipid A disaccharide + UDP + H(+). It functions in the pathway bacterial outer membrane biogenesis; LPS lipid A biosynthesis. Its function is as follows. Condensation of UDP-2,3-diacylglucosamine and 2,3-diacylglucosamine-1-phosphate to form lipid A disaccharide, a precursor of lipid A, a phosphorylated glycolipid that anchors the lipopolysaccharide to the outer membrane of the cell. This is Lipid-A-disaccharide synthase from Hydrogenovibrio crunogenus (strain DSM 25203 / XCL-2) (Thiomicrospira crunogena).